We begin with the raw amino-acid sequence, 437 residues long: UDP-N-acetylmuramate--L-alanine ligase (437 aa).

108-114 (GAHGKTS) lines the ATP pocket.

This sequence belongs to the MurCDEF family.

It localises to the cytoplasm. The enzyme catalyses UDP-N-acetyl-alpha-D-muramate + L-alanine + ATP = UDP-N-acetyl-alpha-D-muramoyl-L-alanine + ADP + phosphate + H(+). It functions in the pathway cell wall biogenesis; peptidoglycan biosynthesis. In terms of biological role, cell wall formation. This Staphylococcus aureus (strain JH9) protein is UDP-N-acetylmuramate--L-alanine ligase.